A 453-amino-acid chain; its full sequence is Phenylalanine-4-hydroxylase (453 aa).

Alanine 2 is subject to N-acetylalanine. Serine 16 bears the Phosphoserine; by PKA mark. The ACT domain occupies 36–114 (SLIFSLKEEV…TVHELSRDKE (79 aa)). The Fe cation site is built by histidine 285, histidine 290, and glutamate 330.

The protein belongs to the biopterin-dependent aromatic amino acid hydroxylase family. In terms of assembly, homodimer and homotetramer. Fe(2+) is required as a cofactor. Phosphorylation at Ser-16 increases basal activity and facilitates activation by the substrate phenylalanine.

The enzyme catalyses (6R)-L-erythro-5,6,7,8-tetrahydrobiopterin + L-phenylalanine + O2 = (4aS,6R)-4a-hydroxy-L-erythro-5,6,7,8-tetrahydrobiopterin + L-tyrosine. Its pathway is amino-acid degradation; L-phenylalanine degradation; acetoacetate and fumarate from L-phenylalanine: step 1/6. With respect to regulation, N-terminal region of PAH is thought to contain allosteric binding sites for phenylalanine and to constitute an 'inhibitory' domain that regulates the activity of a catalytic domain in the C-terminal portion of the molecule. In terms of biological role, catalyzes the hydroxylation of L-phenylalanine to L-tyrosine. The protein is Phenylalanine-4-hydroxylase (Pah) of Rattus norvegicus (Rat).